A 462-amino-acid chain; its full sequence is Cysteine--tRNA ligase (462 aa).

Cysteine 30 contacts Zn(2+). Positions 32-42 (MTVYDYCHVGH) match the 'HIGH' region motif. Residues cysteine 214, histidine 239, and glutamate 243 each coordinate Zn(2+). The 'KMSKS' region signature appears at 271–275 (KMSKS). Position 274 (lysine 274) interacts with ATP.

The protein belongs to the class-I aminoacyl-tRNA synthetase family. Monomer. Zn(2+) is required as a cofactor.

It is found in the cytoplasm. The enzyme catalyses tRNA(Cys) + L-cysteine + ATP = L-cysteinyl-tRNA(Cys) + AMP + diphosphate. This Cupriavidus pinatubonensis (strain JMP 134 / LMG 1197) (Cupriavidus necator (strain JMP 134)) protein is Cysteine--tRNA ligase.